The sequence spans 159 residues: HSP70 co-chaperone SNL1 (159 aa).

The Perinuclear space segment spans residues 1-12; that stretch reads MSHNAMEHWKSK. The helical; Signal-anchor for type II membrane protein transmembrane segment at 13–35 threads the bilayer; that stretch reads LSKTSTSTYVLLAVIAVVFLVTI. The Cytoplasmic segment spans residues 36 to 159; the sequence is RRPNGSKGKS…AMLKSLDSLK (124 aa). The tract at residues 39 to 64 is disordered; it reads NGSKGKSSKKRASKKNKKGKNQFEKA. The segment covering 44 to 58 has biased composition (basic residues); that stretch reads KSSKKRASKKNKKGK. The region spanning 73–159 is the BAG domain; that stretch reads QIDNVSLRYG…AMLKSLDSLK (87 aa).

In terms of assembly, interacts with the HSP70 family members SSA1, SSA4, and SSB1. These interactions are strongly reduced by ADP and ATP.

It localises to the endoplasmic reticulum membrane. The protein localises to the nucleus membrane. In terms of biological role, stimulator of ATPase activity of molecular chaperones of the HSP70 family (principally of the SSA class). Stimulation is important for HSP70-substrate complex dissociation after folding of newly synthesized or refolded proteins. SNL1 is probably involved in nuclear pore biogenesis and in particular the folding or refolding of misfolded NUP116, GLE2 and NIC96. The sequence is that of HSP70 co-chaperone SNL1 (SNL1) from Saccharomyces cerevisiae (strain ATCC 204508 / S288c) (Baker's yeast).